A 98-amino-acid polypeptide reads, in one-letter code: UPF0235 protein APJL_1398 (98 aa).

The protein belongs to the UPF0235 family.

In Actinobacillus pleuropneumoniae serotype 3 (strain JL03), this protein is UPF0235 protein APJL_1398.